The following is a 104-amino-acid chain: DNA-directed RNA polymerase subunit omega (104 aa).

Belongs to the RNA polymerase subunit omega family. As to quaternary structure, the RNAP catalytic core consists of 2 alpha, 1 beta, 1 beta' and 1 omega subunit. When a sigma factor is associated with the core the holoenzyme is formed, which can initiate transcription.

The enzyme catalyses RNA(n) + a ribonucleoside 5'-triphosphate = RNA(n+1) + diphosphate. Promotes RNA polymerase assembly. Latches the N- and C-terminal regions of the beta' subunit thereby facilitating its interaction with the beta and alpha subunits. This is DNA-directed RNA polymerase subunit omega from Streptococcus suis (strain 05ZYH33).